The following is a 138-amino-acid chain: Large ribosomal subunit protein bL19 (138 aa).

This sequence belongs to the bacterial ribosomal protein bL19 family.

In terms of biological role, this protein is located at the 30S-50S ribosomal subunit interface and may play a role in the structure and function of the aminoacyl-tRNA binding site. This chain is Large ribosomal subunit protein bL19, found in Rickettsia africae (strain ESF-5).